Reading from the N-terminus, the 137-residue chain is Large ribosomal subunit protein uL22 (137 aa).

Belongs to the universal ribosomal protein uL22 family. Part of the 50S ribosomal subunit.

In terms of biological role, this protein binds specifically to 23S rRNA; its binding is stimulated by other ribosomal proteins, e.g. L4, L17, and L20. It is important during the early stages of 50S assembly. It makes multiple contacts with different domains of the 23S rRNA in the assembled 50S subunit and ribosome. Functionally, the globular domain of the protein is located near the polypeptide exit tunnel on the outside of the subunit, while an extended beta-hairpin is found that lines the wall of the exit tunnel in the center of the 70S ribosome. This Flavobacterium psychrophilum (strain ATCC 49511 / DSM 21280 / CIP 103535 / JIP02/86) protein is Large ribosomal subunit protein uL22.